The sequence spans 243 residues: Histone H2B.2 (243 aa).

N,N,N-trimethylalanine; alternate is present on Ala2. N,N-dimethylalanine; alternate is present on Ala2. N-methylalanine; alternate is present on Ala2. Residues 67 to 145 are disordered; sequence PDERSLPVGE…KKKKKKKRDD (79 aa). Over residues 120–132 the composition is skewed to basic and acidic residues; it reads GTLKKTDKVEKKQ. Basic residues predominate over residues 133 to 142; the sequence is ENKKKKKKKK.

Belongs to the histone H2B family. The nucleosome is a histone octamer containing two molecules each of H2A, H2B, H3 and H4 assembled in one H3-H4 heterotetramer and two H2A-H2B heterodimers. The octamer wraps approximately 147 bp of DNA. In terms of processing, can be acetylated to form H2BK6ac.

It localises to the nucleus. The protein resides in the chromosome. Its function is as follows. Core component of nucleosome. Nucleosomes wrap and compact DNA into chromatin, limiting DNA accessibility to the cellular machineries which require DNA as a template. Histones thereby play a central role in transcription regulation, DNA repair, DNA replication and chromosomal stability. DNA accessibility is regulated via a complex set of post-translational modifications of histones, also called histone code, and nucleosome remodeling. This Arabidopsis thaliana (Mouse-ear cress) protein is Histone H2B.2.